Consider the following 171-residue polypeptide: uncharacterized protein (171 aa).

Positions 3–171 (KKVAIILANE…FNREIVKQLQ (169 aa)) constitute a PfpI endopeptidase domain.

Belongs to the peptidase C56 family.

This is an uncharacterized protein from Staphylococcus aureus (strain COL).